The sequence spans 464 residues: Cysteine--tRNA ligase (464 aa).

Residue cysteine 28 coordinates Zn(2+). The short motif at 30–40 (PTVYDTAHIGN) is the 'HIGH' region element. Residues cysteine 212, histidine 237, and glutamate 241 each coordinate Zn(2+). The short motif at 270 to 274 (KMSKS) is the 'KMSKS' region element. Lysine 273 contributes to the ATP binding site.

This sequence belongs to the class-I aminoacyl-tRNA synthetase family. As to quaternary structure, monomer. Zn(2+) serves as cofactor.

The protein resides in the cytoplasm. The catalysed reaction is tRNA(Cys) + L-cysteine + ATP = L-cysteinyl-tRNA(Cys) + AMP + diphosphate. The chain is Cysteine--tRNA ligase from Wolbachia pipientis subsp. Culex pipiens (strain wPip).